The sequence spans 213 residues: ATP-dependent Clp protease proteolytic subunit 1 (213 aa).

Ser-114 functions as the Nucleophile in the catalytic mechanism. His-139 is an active-site residue.

This sequence belongs to the peptidase S14 family. Fourteen ClpP subunits assemble into 2 heptameric rings which stack back to back to give a disk-like structure with a central cavity, resembling the structure of eukaryotic proteasomes.

It localises to the cytoplasm. The catalysed reaction is Hydrolysis of proteins to small peptides in the presence of ATP and magnesium. alpha-casein is the usual test substrate. In the absence of ATP, only oligopeptides shorter than five residues are hydrolyzed (such as succinyl-Leu-Tyr-|-NHMec, and Leu-Tyr-Leu-|-Tyr-Trp, in which cleavage of the -Tyr-|-Leu- and -Tyr-|-Trp bonds also occurs).. Its function is as follows. Cleaves peptides in various proteins in a process that requires ATP hydrolysis. Has a chymotrypsin-like activity. Plays a major role in the degradation of misfolded proteins. The chain is ATP-dependent Clp protease proteolytic subunit 1 from Pseudomonas aeruginosa (strain ATCC 15692 / DSM 22644 / CIP 104116 / JCM 14847 / LMG 12228 / 1C / PRS 101 / PAO1).